The primary structure comprises 425 residues: Serine--tRNA ligase (425 aa).

An L-serine-binding site is contributed by threonine 233 to glutamate 235. Arginine 264–glutamate 266 contributes to the ATP binding site. Glutamate 287 contacts L-serine. Glutamate 351 to serine 354 is an ATP binding site. An L-serine-binding site is contributed by serine 387.

This sequence belongs to the class-II aminoacyl-tRNA synthetase family. Type-1 seryl-tRNA synthetase subfamily. Homodimer. The tRNA molecule binds across the dimer.

The protein localises to the cytoplasm. The catalysed reaction is tRNA(Ser) + L-serine + ATP = L-seryl-tRNA(Ser) + AMP + diphosphate + H(+). The enzyme catalyses tRNA(Sec) + L-serine + ATP = L-seryl-tRNA(Sec) + AMP + diphosphate + H(+). It participates in aminoacyl-tRNA biosynthesis; selenocysteinyl-tRNA(Sec) biosynthesis; L-seryl-tRNA(Sec) from L-serine and tRNA(Sec): step 1/1. Functionally, catalyzes the attachment of serine to tRNA(Ser). Is also able to aminoacylate tRNA(Sec) with serine, to form the misacylated tRNA L-seryl-tRNA(Sec), which will be further converted into selenocysteinyl-tRNA(Sec). The polypeptide is Serine--tRNA ligase (Thermotoga neapolitana (strain ATCC 49049 / DSM 4359 / NBRC 107923 / NS-E)).